A 300-amino-acid polypeptide reads, in one-letter code: Protease HtpX homolog (300 aa).

Transmembrane regions (helical) follow at residues 7 to 24 and 29 to 46; these read GILM…GALI and GAII…FTFW. Histidine 130 is a binding site for Zn(2+). Glutamate 131 is a catalytic residue. Histidine 134 serves as a coordination point for Zn(2+). Helical transmembrane passes span 145-165 and 174-194; these read VTAT…FFGG and PMGL…AGLV. Position 203 (glutamate 203) interacts with Zn(2+).

Belongs to the peptidase M48B family. Requires Zn(2+) as cofactor.

The protein localises to the cell inner membrane. This is Protease HtpX homolog from Cereibacter sphaeroides (strain ATCC 17029 / ATH 2.4.9) (Rhodobacter sphaeroides).